Here is a 356-residue protein sequence, read N- to C-terminus: Phosphoribosylformylglycinamidine cyclo-ligase (356 aa).

Belongs to the AIR synthase family.

The protein resides in the cytoplasm. The enzyme catalyses 2-formamido-N(1)-(5-O-phospho-beta-D-ribosyl)acetamidine + ATP = 5-amino-1-(5-phospho-beta-D-ribosyl)imidazole + ADP + phosphate + H(+). The protein operates within purine metabolism; IMP biosynthesis via de novo pathway; 5-amino-1-(5-phospho-D-ribosyl)imidazole from N(2)-formyl-N(1)-(5-phospho-D-ribosyl)glycinamide: step 2/2. This is Phosphoribosylformylglycinamidine cyclo-ligase from Desulfotalea psychrophila (strain LSv54 / DSM 12343).